We begin with the raw amino-acid sequence, 476 residues long: MEEKLNDLKEQGIDWAFANGLIMIKKPTEEEAKNNVVNVTHVPFSLYPSKMNKKLFNEACKLAEDYNLLVHNISKDYDFLQNTLKDVFDDFTQMLLNIQRKVVKEGIKQKISLGIFRSDYMFHNKIEGEEERIYQVELNTISSSLAVVSNRVFNLHKYLIGRNDLNDNGYDLLNHPTNQSDKEISDSIALAHKLYNKEKSSVVLMIIQEGERNIYDQKGLEFQLWSNHSIKLIRRTMKEINQCAKLDEENGSVLIVDGMEISVAYYRAGYTPNDYTSSGGDEWKARLLIERSLAIKCPTIAHHLVGVKKIQQVLAQPGVLEKFINNDKESLQRVKRSFTGLYSLSKEDIDMSVVKEAIESPQNYVMKPQREGGGNNIYNDQVAIALKSMSSEELSSYILMDKIMSKSFKTHVVRDRQLLEIEGLYELGIYSVFISNGDDDIVLNKQAGILLRTKTANSDEVGVAAGFGLLDSPILE.

Position 117 (R117) interacts with substrate. E137 lines the ATP pocket. Positions 137 and 139 each coordinate Mg(2+). Substrate is bound by residues 141–144 (ISSS), 211–213 (ERN), Q217, and 267–270 (RAGY). ATP-binding positions include K308, 367–376 (KPQREGGGNN), Y378, 400–403 (MDKI), and E426. E371 serves as a coordination point for Mg(2+). Position 452 (R452) interacts with substrate. The ATP site is built by K454 and E460. Substrate is bound at residue 463-464 (VA).

Belongs to the eukaryotic GSH synthase family. In terms of assembly, homodimer. Requires Mg(2+) as cofactor.

It catalyses the reaction gamma-L-glutamyl-L-cysteine + glycine + ATP = glutathione + ADP + phosphate + H(+). It functions in the pathway sulfur metabolism; glutathione biosynthesis; glutathione from L-cysteine and L-glutamate: step 2/2. In Dictyostelium discoideum (Social amoeba), this protein is Glutathione synthetase (gshB).